A 156-amino-acid polypeptide reads, in one-letter code: Lipoprotein signal peptidase (156 aa).

A run of 4 helical transmembrane segments spans residues 8 to 28 (IYIN…KWIL), 39 to 59 (VFFI…SILS), 67 to 87 (YFLL…MIKF), and 99 to 119 (SLIL…GFVI). Catalysis depends on residues Asp120 and Asp138. Residues 129-149 (WHFATFNIADFSIFIGMIMII) form a helical membrane-spanning segment.

This sequence belongs to the peptidase A8 family.

The protein resides in the cell inner membrane. It carries out the reaction Release of signal peptides from bacterial membrane prolipoproteins. Hydrolyzes -Xaa-Yaa-Zaa-|-(S,diacylglyceryl)Cys-, in which Xaa is hydrophobic (preferably Leu), and Yaa (Ala or Ser) and Zaa (Gly or Ala) have small, neutral side chains.. The protein operates within protein modification; lipoprotein biosynthesis (signal peptide cleavage). In terms of biological role, this protein specifically catalyzes the removal of signal peptides from prolipoproteins. This is Lipoprotein signal peptidase from Buchnera aphidicola subsp. Schizaphis graminum (strain Sg).